The primary structure comprises 774 residues: Transmembrane GTPase fzo-1 (774 aa).

A disordered region spans residues 1-29 (MSGTASLVHTLPASGDSNHRGLHSLKNSR). The Cytoplasmic portion of the chain corresponds to 1-617 (MSGTASLVHT…EEQAMMTQMV (617 aa)). A compositionally biased stretch (basic residues) spans 20–29 (RGLHSLKNSR). Residues 51–71 (YGELKDNVAELEGVYKDIKEN) are a coiled coil. The Dynamin-type G domain occupies 97–352 (QRDNMKVVFF…TRALEFQNFE (256 aa)). Positions 107 to 114 (GRTSNGKS) are G1 motif. 110-115 (SNGKST) contacts GTP. The segment at 133–134 (TT) is G2 motif. The tract at residues 211–214 (DSPG) is G3 motif. A GTP-binding site is contributed by 270 to 273 (NRWD). The interval 270–273 (NRWD) is G4 motif. Residue glutamate 300 is a region of interest, G5 motif. A GTP-binding site is contributed by serine 317. Residues 385 to 415 (NLNSVLTSAAEQRSKLQNNLNESTRTFNECR) are a coiled coil. Residues 618 to 638 (LTSAAFLANGSLGVLVVGGIV) form a helical membrane-spanning segment. The Mitochondrial intermembrane portion of the chain corresponds to 639–640 (YK). A helical transmembrane segment spans residues 641–661 (AVGWRVIAVGGAAYAGLYAWE). The Cytoplasmic segment spans residues 662–774 (RMRWNSGAKE…YLRSDSPPTP (113 aa)).

The protein belongs to the TRAFAC class dynamin-like GTPase superfamily. Dynamin/Fzo/YdjA family. Mitofusin subfamily. As to quaternary structure, interacts with ced-9; interaction may be suppressed by interaction of ced-9 with egl-1.

The protein localises to the mitochondrion outer membrane. The catalysed reaction is GTP + H2O = GDP + phosphate + H(+). Its function is as follows. Probable transmembrane GTPase. Mediates mitochondrial fusion. Fusion of mitochondria occurs in many cell types and constitutes an important step in mitochondria morphology, which is balanced between fusion and fission. Dispensable for normal apoptotic processes during embryonic development. This chain is Transmembrane GTPase fzo-1, found in Caenorhabditis elegans.